A 1035-amino-acid polypeptide reads, in one-letter code: Valine--tRNA ligase (1035 aa).

The 'HIGH' region motif lies at 45-55 (PNVTGALHLGH). The stretch at 253–281 (EKLSDANEKEAVDLNKQIEALQKRREERL) forms a coiled coil. Residue Lys619 participates in ATP binding. Residues 967-1035 (DVEAELARLE…QDILKLQSKK (69 aa)) are a coiled coil.

This sequence belongs to the class-I aminoacyl-tRNA synthetase family. ValS type 1 subfamily. Monomer.

The protein resides in the cytoplasm. The enzyme catalyses tRNA(Val) + L-valine + ATP = L-valyl-tRNA(Val) + AMP + diphosphate. Functionally, catalyzes the attachment of valine to tRNA(Val). As ValRS can inadvertently accommodate and process structurally similar amino acids such as threonine, to avoid such errors, it has a 'posttransfer' editing activity that hydrolyzes mischarged Thr-tRNA(Val) in a tRNA-dependent manner. The sequence is that of Valine--tRNA ligase from Rhodopirellula baltica (strain DSM 10527 / NCIMB 13988 / SH1).